The following is a 371-amino-acid chain: Cell division control protein 3 (371 aa).

The region spanning 22–307 (AGIDFNIMTV…DEYKTREIGL (286 aa)) is the Septin-type G domain. The interval 32–39 (GSNGLGKS) is G1 motif. GTP-binding positions include 32 to 39 (GSNGLGKS), Gly-116, 195 to 203 (KSDLLSDSE), and Arg-257. Positions 113–116 (EVDG) are G3 motif. The interval 194 to 197 (GKSD) is G4 motif.

This sequence belongs to the TRAFAC class TrmE-Era-EngA-EngB-Septin-like GTPase superfamily. Septin GTPase family. Component of the septin complex.

In terms of biological role, septins are GTPases involved in cytokinesis. The septins localize to the site of cleavage and act as a structural scaffold that recruits different components involved in diverse processes at specific stages during the cell cycle. Septins are also involved in cell morphogenesis, chitin deposition, cell cycle regulation, cell compartmentalization and spore wall formation. The polypeptide is Cell division control protein 3 (CDC3) (Encephalitozoon cuniculi (strain GB-M1) (Microsporidian parasite)).